Consider the following 440-residue polypeptide: Suppressor of cytokine signaling 4 (440 aa).

Over residues 1 to 10 (MAENNENISK) the composition is skewed to polar residues. Residues 1-29 (MAENNENISKNVDVRPKTSRSRSADRKDG) are disordered. The segment covering 12–29 (VDVRPKTSRSRSADRKDG) has biased composition (basic and acidic residues). The SH2 domain maps to 286 to 381 (CYWGVMDKYA…FFEPLLSTPL (96 aa)). Residues 376–425 (LLSTPLIRTFPFSLQHICRTVICNCTTYDGIDALPIPSSMKLYLKEYHYK) enclose the SOCS box domain.

The protein operates within protein modification; protein ubiquitination. Functionally, SOCS family proteins form part of a classical negative feedback system that regulates cytokine signal transduction. Substrate-recognition component of a SCF-like ECS (Elongin BC-CUL2/5-SOCS-box protein) E3 ubiquitin-protein ligase complex which mediates the ubiquitination and subsequent proteasomal degradation of target proteins. Inhibits EGF signaling by mediating the degradation of the Tyr-phosphorylated EGF receptor/EGFR. In Pongo abelii (Sumatran orangutan), this protein is Suppressor of cytokine signaling 4 (SOCS4).